Consider the following 200-residue polypeptide: 2-phospho-L-lactate guanylyltransferase (200 aa).

The protein belongs to the CofC family. Homodimer.

It carries out the reaction (2S)-2-phospholactate + GTP + H(+) = (2S)-lactyl-2-diphospho-5'-guanosine + diphosphate. The protein operates within cofactor biosynthesis; coenzyme F420 biosynthesis. Functionally, guanylyltransferase that catalyzes the activation of (2S)-2-phospholactate (2-PL) as (2S)-lactyl-2-diphospho-5'-guanosine, via the condensation of 2-PL with GTP. It is involved in the biosynthesis of coenzyme F420, a hydride carrier cofactor. This chain is 2-phospho-L-lactate guanylyltransferase, found in Ferroglobus placidus (strain DSM 10642 / AEDII12DO).